The sequence spans 163 residues: 16S rRNA aminocarboxypropyltransferase (163 aa).

4 residues coordinate S-adenosyl-L-methionine: threonine 18, isoleucine 66, leucine 87, and serine 106.

It belongs to the TDD superfamily. TSR3 family.

It is found in the cytoplasm. It catalyses the reaction an N(1)-methylpseudouridine in rRNA + S-adenosyl-L-methionine = N(1)-methyl-N(3)-[(3S)-3-amino-3-carboxypropyl]pseudouridine in rRNA + S-methyl-5'-thioadenosine + H(+). In terms of biological role, aminocarboxypropyltransferase that catalyzes the aminocarboxypropyl transfer on pseudouridine corresponding to position 914 in M.jannaschii 16S rRNA. It constitutes the last step in biosynthesis of the hypermodified N1-methyl-N3-(3-amino-3-carboxypropyl) pseudouridine (m1acp3-Psi). The polypeptide is 16S rRNA aminocarboxypropyltransferase (Thermoplasma acidophilum (strain ATCC 25905 / DSM 1728 / JCM 9062 / NBRC 15155 / AMRC-C165)).